The sequence spans 115 residues: Large ribosomal subunit protein bL20 (115 aa).

This sequence belongs to the bacterial ribosomal protein bL20 family.

Its function is as follows. Binds directly to 23S ribosomal RNA and is necessary for the in vitro assembly process of the 50S ribosomal subunit. It is not involved in the protein synthesizing functions of that subunit. The chain is Large ribosomal subunit protein bL20 from Microcystis aeruginosa (strain NIES-843 / IAM M-2473).